We begin with the raw amino-acid sequence, 155 residues long: 6,7-dimethyl-8-ribityllumazine synthase (155 aa).

Residues F23, A57 to E59, and A81 to I83 each bind 5-amino-6-(D-ribitylamino)uracil. Residue A86–T87 participates in (2S)-2-hydroxy-3-oxobutyl phosphate binding. Residue H89 is the Proton donor of the active site. F114 is a binding site for 5-amino-6-(D-ribitylamino)uracil. R128 serves as a coordination point for (2S)-2-hydroxy-3-oxobutyl phosphate.

Belongs to the DMRL synthase family.

It carries out the reaction (2S)-2-hydroxy-3-oxobutyl phosphate + 5-amino-6-(D-ribitylamino)uracil = 6,7-dimethyl-8-(1-D-ribityl)lumazine + phosphate + 2 H2O + H(+). The protein operates within cofactor biosynthesis; riboflavin biosynthesis; riboflavin from 2-hydroxy-3-oxobutyl phosphate and 5-amino-6-(D-ribitylamino)uracil: step 1/2. Its function is as follows. Catalyzes the formation of 6,7-dimethyl-8-ribityllumazine by condensation of 5-amino-6-(D-ribitylamino)uracil with 3,4-dihydroxy-2-butanone 4-phosphate. This is the penultimate step in the biosynthesis of riboflavin. This chain is 6,7-dimethyl-8-ribityllumazine synthase, found in Pelotomaculum thermopropionicum (strain DSM 13744 / JCM 10971 / SI).